Here is a 1070-residue protein sequence, read N- to C-terminus: DNA-directed RNA polymerase subunit beta (1070 aa).

It belongs to the RNA polymerase beta chain family. In plastids the minimal PEP RNA polymerase catalytic core is composed of four subunits: alpha, beta, beta', and beta''. When a (nuclear-encoded) sigma factor is associated with the core the holoenzyme is formed, which can initiate transcription.

The protein resides in the plastid. It is found in the chloroplast. It carries out the reaction RNA(n) + a ribonucleoside 5'-triphosphate = RNA(n+1) + diphosphate. DNA-dependent RNA polymerase catalyzes the transcription of DNA into RNA using the four ribonucleoside triphosphates as substrates. The chain is DNA-directed RNA polymerase subunit beta from Solanum tuberosum (Potato).